Reading from the N-terminus, the 493-residue chain is uncharacterized protein (493 aa).

Residues 96 to 124 form a disordered region; sequence TTVAKASPPPAKPASAPTEITWKGSPQFT.

This is an uncharacterized protein from Caulobacter vibrioides (strain ATCC 19089 / CIP 103742 / CB 15) (Caulobacter crescentus).